Here is a 1025-residue protein sequence, read N- to C-terminus: Multidrug resistance protein MdtC (1025 aa).

12 consecutive transmembrane segments (helical) span residues 3–23, 333–353, 360–380, 387–407, 431–451, 463–483, 528–548, 853–873, 875–895, 897–917, 953–973, and 984–1004; these read FFALFIYRPVATILLSVAITL, EVEQTLIISVALVILVVFLFL, IIPAVAVPVSLIGTFAAMYLC, LSLMALTIATGFVVDDAIVVL, VGFTVLSMSLSLVAVFLPLLL, FAVTLSVAIGISLLVSLTLTP, LVGVVLLGTIALNIWLYISIP, VILIIAAIATVYIVLGILYES, VHPLTILSTLPSAGVGALLAL, LFNAPFSLIALIGIMLLIGIV, PIMMTTLAALFGALPLVLSGG, and ITIVGGLVMSQLLTLYTTPVV.

It belongs to the resistance-nodulation-cell division (RND) (TC 2.A.6) family. MdtC subfamily. As to quaternary structure, part of a tripartite efflux system composed of MdtA, MdtB and MdtC. MdtC forms a heteromultimer with MdtB.

The protein resides in the cell inner membrane. In terms of biological role, the MdtABC tripartite complex confers resistance against novobiocin and deoxycholate. The polypeptide is Multidrug resistance protein MdtC (Escherichia coli O127:H6 (strain E2348/69 / EPEC)).